The sequence spans 228 residues: Octanoyltransferase (228 aa).

One can recognise a BPL/LPL catalytic domain in the interval 32–214 (DVVPDTVLLV…HLRRLFERDW (183 aa)). Substrate is bound by residues 77–84 (RGGDVTYH), 144–146 (SVG), and 157–159 (GIA). Cys-175 serves as the catalytic Acyl-thioester intermediate.

Belongs to the LipB family.

It is found in the cytoplasm. It catalyses the reaction octanoyl-[ACP] + L-lysyl-[protein] = N(6)-octanoyl-L-lysyl-[protein] + holo-[ACP] + H(+). Its pathway is protein modification; protein lipoylation via endogenous pathway; protein N(6)-(lipoyl)lysine from octanoyl-[acyl-carrier-protein]: step 1/2. Catalyzes the transfer of endogenously produced octanoic acid from octanoyl-acyl-carrier-protein onto the lipoyl domains of lipoate-dependent enzymes. Lipoyl-ACP can also act as a substrate although octanoyl-ACP is likely to be the physiological substrate. The chain is Octanoyltransferase from Syntrophobacter fumaroxidans (strain DSM 10017 / MPOB).